Here is a 575-residue protein sequence, read N- to C-terminus: Amyloid-beta A4 precursor protein-binding family A member 3 (575 aa).

Met-1 carries the N-acetylmethionine modification. Over residues Met-1 to Pro-10 the composition is skewed to polar residues. 2 disordered regions span residues Met-1 to Met-50 and Cys-118 to Asp-211. Ser-11 is subject to Phosphoserine. Residues Glu-143–Glu-153 show a composition bias toward acidic residues. Residues Glu-156–Pro-184 show a composition bias toward low complexity. Phosphoserine is present on Ser-171. The interval Leu-215–Pro-364 is required for interaction with NECAB3. The PID domain maps to Asp-217 to Gly-381. Ser-372 carries the post-translational modification Phosphoserine. PDZ domains follow at residues Glu-394–Cys-480 and Thr-485–Ala-560.

As to quaternary structure, binds to the cytoplasmic domain of amyloid protein (APP) in vivo. Interacts with HIF1AN (via N-terminus). Interacts with NECAB3; seems to mediate the interaction between NECAB3 and HIF1AN. As to expression, expressed in all tissues examined with lower levels in brain and testis.

Its subcellular location is the cytoplasm. It localises to the perinuclear region. In terms of biological role, may modulate processing of the amyloid-beta precursor protein (APP) and hence formation of APP-beta. May enhance the activity of HIF1A in macrophages by inhibiting the activity of HIF1AN. The chain is Amyloid-beta A4 precursor protein-binding family A member 3 (APBA3) from Homo sapiens (Human).